A 92-amino-acid chain; its full sequence is N(2)-fixation sustaining protein CowN (92 aa).

It belongs to the CowN family.

Its function is as follows. Is required to sustain N(2)-dependent growth in the presence of low levels of carbon monoxide (CO). Probably acts by protecting the N(2) fixation ability of the nitrogenase complex, which is inactivated in the presence of CO. This chain is N(2)-fixation sustaining protein CowN, found in Rhodopseudomonas palustris (strain ATCC BAA-98 / CGA009).